We begin with the raw amino-acid sequence, 245 residues long: 6-carboxyhexanoate--CoA ligase (245 aa).

It belongs to the BioW family. As to quaternary structure, homodimer. The cofactor is Mg(2+).

It carries out the reaction heptanedioate + ATP + CoA = 6-carboxyhexanoyl-CoA + AMP + diphosphate. It functions in the pathway metabolic intermediate metabolism; pimeloyl-CoA biosynthesis; pimeloyl-CoA from pimelate: step 1/1. Catalyzes the transformation of pimelate into pimeloyl-CoA with concomitant hydrolysis of ATP to AMP. The protein is 6-carboxyhexanoate--CoA ligase of Thermodesulfovibrio yellowstonii (strain ATCC 51303 / DSM 11347 / YP87).